Reading from the N-terminus, the 804-residue chain is DNA gyrase subunit A (804 aa).

In terms of domain architecture, Topo IIA-type catalytic spans 31 to 495 (IPDVRDGLKP…QSIEYNEEEL (465 aa)). Residue Y119 is the O-(5'-phospho-DNA)-tyrosine intermediate of the active site. The GyrA-box signature appears at 522–528 (QKRGGKG).

This sequence belongs to the type II topoisomerase GyrA/ParC subunit family. In terms of assembly, heterotetramer, composed of two GyrA and two GyrB chains. In the heterotetramer, GyrA contains the active site tyrosine that forms a transient covalent intermediate with DNA, while GyrB binds cofactors and catalyzes ATP hydrolysis.

The protein resides in the cytoplasm. The catalysed reaction is ATP-dependent breakage, passage and rejoining of double-stranded DNA.. Its function is as follows. A type II topoisomerase that negatively supercoils closed circular double-stranded (ds) DNA in an ATP-dependent manner to modulate DNA topology and maintain chromosomes in an underwound state. Negative supercoiling favors strand separation, and DNA replication, transcription, recombination and repair, all of which involve strand separation. Also able to catalyze the interconversion of other topological isomers of dsDNA rings, including catenanes and knotted rings. Type II topoisomerases break and join 2 DNA strands simultaneously in an ATP-dependent manner. This is DNA gyrase subunit A from Thermotoga maritima (strain ATCC 43589 / DSM 3109 / JCM 10099 / NBRC 100826 / MSB8).